The following is a 291-amino-acid chain: 4-hydroxy-tetrahydrodipicolinate synthase (291 aa).

Position 44 (T44) interacts with pyruvate. Residue Y132 is the Proton donor/acceptor of the active site. Catalysis depends on K160, which acts as the Schiff-base intermediate with substrate. A pyruvate-binding site is contributed by V202.

The protein belongs to the DapA family. Homotetramer; dimer of dimers.

It is found in the cytoplasm. The enzyme catalyses L-aspartate 4-semialdehyde + pyruvate = (2S,4S)-4-hydroxy-2,3,4,5-tetrahydrodipicolinate + H2O + H(+). The protein operates within amino-acid biosynthesis; L-lysine biosynthesis via DAP pathway; (S)-tetrahydrodipicolinate from L-aspartate: step 3/4. Functionally, catalyzes the condensation of (S)-aspartate-beta-semialdehyde [(S)-ASA] and pyruvate to 4-hydroxy-tetrahydrodipicolinate (HTPA). In Clostridium perfringens (strain SM101 / Type A), this protein is 4-hydroxy-tetrahydrodipicolinate synthase.